The following is a 918-amino-acid chain: Non-lysosomal glucosylceramidase (918 aa).

The disordered stretch occupies residues 886–918 (HKKSRRPSVTQGTGLSTQPECGPKRSLANLNSE). A compositionally biased stretch (polar residues) spans 892–904 (PSVTQGTGLSTQP). Serine 893 is modified (phosphoserine).

It belongs to the non-lysosomal glucosylceramidase family. In terms of tissue distribution, widely expressed at low level. Highly expressed in testis and brain. Ubiquitously expressed in the brain (at protein level). Expressed by Sertoli cells (at protein level).

The protein resides in the endoplasmic reticulum membrane. Its subcellular location is the golgi apparatus membrane. It carries out the reaction a beta-D-glucosyl-(1&lt;-&gt;1')-N-acylsphing-4-enine + H2O = an N-acylsphing-4-enine + D-glucose. The enzyme catalyses a beta-D-galactosyl-(1&lt;-&gt;1')-N-acylsphing-4-enine + H2O = an N-acylsphing-4-enine + D-galactose. The catalysed reaction is beta-D-glucosyl-(1-&gt;3)-O-lithocholate + H2O = lithocholate + D-glucose. It catalyses the reaction beta-D-glucosyl-(1-&gt;3)-O-chenodeoxycholate + H2O = chenodeoxycholate + D-glucose. It carries out the reaction a di-trans,poly-cis-dolichyl beta-D-glucosyl phosphate + chenodeoxycholate = beta-D-glucosyl-(1-&gt;3)-O-chenodeoxycholate + a di-trans,poly-cis-dolichyl phosphate + H(+). The enzyme catalyses octyl beta-D-glucose + chenodeoxycholate = beta-D-glucosyl-(1-&gt;3)-O-chenodeoxycholate + octan-1-ol. The catalysed reaction is cholesteryl 3-beta-D-glucoside + H2O = cholesterol + D-glucose. It catalyses the reaction a beta-D-glucosyl-(1&lt;-&gt;1')-N-acylsphing-4-enine + cholesterol = cholesteryl 3-beta-D-glucoside + an N-acylsphing-4-enine. It carries out the reaction beta-D-glucosyl-N-(9Z-octadecenoyl)-sphing-4E-enine + cholesterol = N-(9Z-octadecenoyl)-sphing-4-enine + cholesteryl 3-beta-D-glucoside. The enzyme catalyses a beta-D-galactosyl-(1&lt;-&gt;1')-N-acylsphing-4-enine + cholesterol = cholesteryl 3-beta-D-galactoside + an N-acylsphing-4-enine. The catalysed reaction is 1-(beta-D-galactosyl)-N-dodecanoylsphing-4-enine + cholesterol = cholesteryl 3-beta-D-galactoside + N-dodecanoylsphing-4-enine. It functions in the pathway lipid metabolism; sphingolipid metabolism. Its pathway is steroid metabolism; cholesterol metabolism. Enzymatic activity is dependent on membrane association and requires the presence of lipids. Inhibited by N-(adamantanemethyloxypentyl)-deoxynojirimycin/AMP-DNM. Inhibited by its product sphingosine/N-acylsphing-4-enine in a feedback loop. Also inhibited by other non-acetylated sphingoid bases and their derivatives but not by sphingosine-1-phosphate and complex sphingolipids. Non-lysosomal glucosylceramidase that catalyzes the hydrolysis of glucosylceramides/GlcCers (such as beta-D-glucosyl-(1&lt;-&gt;1')-N-acylsphing-4-enine) to free glucose and ceramides (such as N-acylsphing-4-enine). GlcCers are membrane glycosphingolipids that have a wide intracellular distribution. They are the main precursors of more complex glycosphingolipids that play a role in cellular growth, differentiation, adhesion, signaling, cytoskeletal dynamics and membrane properties. Also involved in the transglucosylation of cholesterol, transferring glucose from GlcCer, thereby modifying its water solubility and biological properties. Under specific conditions, may catalyze the reverse reaction, transferring glucose from cholesteryl-3-beta-D-glucoside to ceramide (such as N-acylsphing-4-enine). May play a role in the metabolism of bile acids. Able to hydrolyze bile acid 3-O-glucosides as well as to produce bile acid-glucose conjugates thanks to a bile acid glucosyl transferase activity. Catalyzes the hydrolysis of galactosylceramides/GalCers (such as beta-D-galactosyl-(1&lt;-&gt;1')-N-acylsphing-4-enine), as well as galactosyl transfer between GalCers and cholesterol in vitro with lower activity compared with their activity against GlcCers. In Mus musculus (Mouse), this protein is Non-lysosomal glucosylceramidase.